We begin with the raw amino-acid sequence, 142 residues long: Large ribosomal subunit protein uL13 (142 aa).

It belongs to the universal ribosomal protein uL13 family. As to quaternary structure, part of the 50S ribosomal subunit.

Its function is as follows. This protein is one of the early assembly proteins of the 50S ribosomal subunit, although it is not seen to bind rRNA by itself. It is important during the early stages of 50S assembly. In Burkholderia cenocepacia (strain ATCC BAA-245 / DSM 16553 / LMG 16656 / NCTC 13227 / J2315 / CF5610) (Burkholderia cepacia (strain J2315)), this protein is Large ribosomal subunit protein uL13.